The primary structure comprises 363 residues: Flagellar P-ring protein (363 aa).

The N-terminal stretch at 1–20 (MKYRLIVALAMLVLSLPSQA) is a signal peptide.

This sequence belongs to the FlgI family. The basal body constitutes a major portion of the flagellar organelle and consists of four rings (L,P,S, and M) mounted on a central rod.

Its subcellular location is the periplasm. The protein localises to the bacterial flagellum basal body. Its function is as follows. Assembles around the rod to form the L-ring and probably protects the motor/basal body from shearing forces during rotation. The protein is Flagellar P-ring protein of Shewanella sp. (strain ANA-3).